The following is a 178-amino-acid chain: Ribosomal RNA small subunit methyltransferase G (178 aa).

S-adenosyl-L-methionine-binding positions include Gly-54, Leu-59, 105–106 (LE), and Arg-120.

This sequence belongs to the methyltransferase superfamily. RNA methyltransferase RsmG family.

The protein resides in the cytoplasm. It carries out the reaction guanosine(527) in 16S rRNA + S-adenosyl-L-methionine = N(7)-methylguanosine(527) in 16S rRNA + S-adenosyl-L-homocysteine. Functionally, specifically methylates the N7 position of guanine in position 527 of 16S rRNA. This chain is Ribosomal RNA small subunit methyltransferase G, found in Helicobacter acinonychis (strain Sheeba).